The following is a 162-amino-acid chain: UPF0260 protein Caul_3920 (162 aa).

Belongs to the UPF0260 family.

The sequence is that of UPF0260 protein Caul_3920 from Caulobacter sp. (strain K31).